The primary structure comprises 91 residues: ATP synthase subunit c 1 (91 aa).

2 consecutive transmembrane segments (helical) span residues 4–24 and 53–73; these read FTMC…GTAI and IGLA…LIIL.

The protein belongs to the ATPase C chain family. In terms of assembly, F-type ATPases have 2 components, F(1) - the catalytic core - and F(0) - the membrane proton channel. F(1) has five subunits: alpha(3), beta(3), gamma(1), delta(1), epsilon(1). F(0) has three main subunits: a(1), b(2) and c(10-14). The alpha and beta chains form an alternating ring which encloses part of the gamma chain. F(1) is attached to F(0) by a central stalk formed by the gamma and epsilon chains, while a peripheral stalk is formed by the delta and b chains.

Its subcellular location is the cell inner membrane. Functionally, f(1)F(0) ATP synthase produces ATP from ADP in the presence of a proton or sodium gradient. F-type ATPases consist of two structural domains, F(1) containing the extramembraneous catalytic core and F(0) containing the membrane proton channel, linked together by a central stalk and a peripheral stalk. During catalysis, ATP synthesis in the catalytic domain of F(1) is coupled via a rotary mechanism of the central stalk subunits to proton translocation. In terms of biological role, key component of the F(0) channel; it plays a direct role in translocation across the membrane. A homomeric c-ring of between 10-14 subunits forms the central stalk rotor element with the F(1) delta and epsilon subunits. The polypeptide is ATP synthase subunit c 1 (Pelobacter propionicus (strain DSM 2379 / NBRC 103807 / OttBd1)).